A 148-amino-acid polypeptide reads, in one-letter code: Calmodulin-4 (148 aa).

4 EF-hand domains span residues 8-43 (EEVA…LGKN), 44-79 (LPEK…YKKG), 80-115 (HRAG…LGES), and 116-148 (LSQE…HVEN). 15 residues coordinate Ca(2+): D21, N23, D25, H27, E32, D57, D59, D61, K63, E68, D93, N95, D97, Y99, and E104.

Implicated in the early stage of ectopic ossification. The sequence is that of Calmodulin-4 (Calm4) from Mus musculus (Mouse).